The primary structure comprises 342 residues: N-acetyl-gamma-glutamyl-phosphate reductase (342 aa).

The active site involves cysteine 149.

This sequence belongs to the NAGSA dehydrogenase family. Type 1 subfamily.

The protein resides in the cytoplasm. It catalyses the reaction N-acetyl-L-glutamate 5-semialdehyde + phosphate + NADP(+) = N-acetyl-L-glutamyl 5-phosphate + NADPH + H(+). Its pathway is amino-acid biosynthesis; L-arginine biosynthesis; N(2)-acetyl-L-ornithine from L-glutamate: step 3/4. Functionally, catalyzes the NADPH-dependent reduction of N-acetyl-5-glutamyl phosphate to yield N-acetyl-L-glutamate 5-semialdehyde. The chain is N-acetyl-gamma-glutamyl-phosphate reductase from Cereibacter sphaeroides (strain ATCC 17025 / ATH 2.4.3) (Rhodobacter sphaeroides).